Reading from the N-terminus, the 247-residue chain is Ribosomal RNA small subunit methyltransferase J (247 aa).

S-adenosyl-L-methionine is bound by residues Arg-101–Asp-102, Glu-117–Arg-118, Ser-153–Ser-154, and Asp-171.

The protein belongs to the methyltransferase superfamily. RsmJ family.

The protein resides in the cytoplasm. The enzyme catalyses guanosine(1516) in 16S rRNA + S-adenosyl-L-methionine = N(2)-methylguanosine(1516) in 16S rRNA + S-adenosyl-L-homocysteine + H(+). Functionally, specifically methylates the guanosine in position 1516 of 16S rRNA. The polypeptide is Ribosomal RNA small subunit methyltransferase J (Photorhabdus laumondii subsp. laumondii (strain DSM 15139 / CIP 105565 / TT01) (Photorhabdus luminescens subsp. laumondii)).